We begin with the raw amino-acid sequence, 221 residues long: Probable chemoreceptor glutamine deamidase CheD 1 (221 aa).

Belongs to the CheD family.

The catalysed reaction is L-glutaminyl-[protein] + H2O = L-glutamyl-[protein] + NH4(+). Functionally, probably deamidates glutamine residues to glutamate on methyl-accepting chemotaxis receptors (MCPs), playing an important role in chemotaxis. This Methanosarcina mazei (strain ATCC BAA-159 / DSM 3647 / Goe1 / Go1 / JCM 11833 / OCM 88) (Methanosarcina frisia) protein is Probable chemoreceptor glutamine deamidase CheD 1.